Reading from the N-terminus, the 123-residue chain is Large ribosomal subunit protein uL29 (123 aa).

Belongs to the universal ribosomal protein uL29 family. In terms of assembly, component of the large ribosomal subunit.

The protein localises to the cytoplasm. Functionally, component of the large ribosomal subunit. The ribosome is a large ribonucleoprotein complex responsible for the synthesis of proteins in the cell. This Ictalurus punctatus (Channel catfish) protein is Large ribosomal subunit protein uL29 (rpl35).